A 565-amino-acid polypeptide reads, in one-letter code: Glucose-6-phosphate isomerase (565 aa).

E373 acts as the Proton donor in catalysis. Catalysis depends on residues H404 and K530.

This sequence belongs to the GPI family.

It is found in the cytoplasm. It catalyses the reaction alpha-D-glucose 6-phosphate = beta-D-fructose 6-phosphate. The protein operates within carbohydrate biosynthesis; gluconeogenesis. It functions in the pathway carbohydrate degradation; glycolysis; D-glyceraldehyde 3-phosphate and glycerone phosphate from D-glucose: step 2/4. Catalyzes the reversible isomerization of glucose-6-phosphate to fructose-6-phosphate. This Corynebacterium jeikeium (strain K411) protein is Glucose-6-phosphate isomerase.